The sequence spans 453 residues: Nuclear distribution protein nudF-2 (453 aa).

In terms of domain architecture, LisH spans 9–41 (QADELHRALIAYLTAANLPNTAAALREELNLSE). A coiled-coil region spans residues 62 to 88 (SVVRLQKKIMDLESRNHILQSELDNAT). Residues 84–107 (LDNATPTSRQNKDPVAWLPRAPPR) form a disordered region. 7 WD repeats span residues 112–153 (SHRD…RTIK), 155–195 (HTKA…KNIR), 199–239 (GHDH…CVKT), 242–281 (GHAE…PEPK), 286–345 (GHEH…IKTL), 347–386 (GHDN…KCVK), and 391–449 (AHGH…LNVR).

Belongs to the WD repeat LIS1/nudF family. In terms of assembly, self-associates. Interacts with ro-11/nde1 and dynein.

The protein localises to the cytoplasm. The protein resides in the cytoskeleton. Its subcellular location is the spindle pole. Its function is as follows. Positively regulates the activity of the minus-end directed microtubule motor protein dynein. May enhance dynein-mediated microtubule sliding by targeting dynein to the microtubule plus end. Required for nuclear migration during vegetative growth as well as development. Required for retrograde early endosome (EE) transport from the hyphal tip. Required for localization of dynein to the mitotic spindle poles. Recruits additional proteins to the dynein complex at SPBs. In Neurospora crassa (strain ATCC 24698 / 74-OR23-1A / CBS 708.71 / DSM 1257 / FGSC 987), this protein is Nuclear distribution protein nudF-2 (nmp-1).